The following is a 149-amino-acid chain: Deoxyuridine 5'-triphosphate nucleotidohydrolase (149 aa).

Residues 68 to 70, asparagine 81, 85 to 87, and lysine 95 each bind substrate; these read RSG and TVD.

It belongs to the dUTPase family. It depends on Mg(2+) as a cofactor.

The enzyme catalyses dUTP + H2O = dUMP + diphosphate + H(+). Its pathway is pyrimidine metabolism; dUMP biosynthesis; dUMP from dCTP (dUTP route): step 2/2. Functionally, this enzyme is involved in nucleotide metabolism: it produces dUMP, the immediate precursor of thymidine nucleotides and it decreases the intracellular concentration of dUTP so that uracil cannot be incorporated into DNA. The sequence is that of Deoxyuridine 5'-triphosphate nucleotidohydrolase from Wolinella succinogenes (strain ATCC 29543 / DSM 1740 / CCUG 13145 / JCM 31913 / LMG 7466 / NCTC 11488 / FDC 602W) (Vibrio succinogenes).